A 677-amino-acid polypeptide reads, in one-letter code: DNA ligase (677 aa).

NAD(+) contacts are provided by residues Asp-38 to Asp-42, Ser-87 to Leu-88, and Glu-119. The active-site N6-AMP-lysine intermediate is Lys-121. Residues Arg-142, Glu-179, Lys-296, and Lys-320 each contribute to the NAD(+) site. The Zn(2+) site is built by Cys-414, Cys-417, Cys-432, and Cys-438. In terms of domain architecture, BRCT spans Val-595–Phe-677.

The protein belongs to the NAD-dependent DNA ligase family. LigA subfamily. Mg(2+) is required as a cofactor. Requires Mn(2+) as cofactor.

It carries out the reaction NAD(+) + (deoxyribonucleotide)n-3'-hydroxyl + 5'-phospho-(deoxyribonucleotide)m = (deoxyribonucleotide)n+m + AMP + beta-nicotinamide D-nucleotide.. Functionally, DNA ligase that catalyzes the formation of phosphodiester linkages between 5'-phosphoryl and 3'-hydroxyl groups in double-stranded DNA using NAD as a coenzyme and as the energy source for the reaction. It is essential for DNA replication and repair of damaged DNA. The polypeptide is DNA ligase (Coxiella burnetii (strain CbuG_Q212) (Coxiella burnetii (strain Q212))).